The following is a 153-amino-acid chain: Heavy metal-associated isoprenylated plant protein 25 (153 aa).

Residues 24–88 (LQTVDVRVLI…IIHRTGKRAE (65 aa)) enclose the HMA domain. Residues cysteine 35 and cysteine 38 each coordinate a metal cation. Position 150 is a cysteine methyl ester (cysteine 150). A lipid anchor (S-farnesyl cysteine) is attached at cysteine 150. The propeptide at 151–153 (VVM) is removed in mature form.

It belongs to the HIPP family. In terms of tissue distribution, expressed in roots, shoot apical meristem, trichomes and flower buds.

The protein localises to the membrane. In terms of biological role, heavy-metal-binding protein. Binds cadmium. May be involved in cadmium transport and play a role in cadmium detoxification. This is Heavy metal-associated isoprenylated plant protein 25 from Arabidopsis thaliana (Mouse-ear cress).